The chain runs to 111 residues: Protein IDA-LIKE 5 (111 aa).

A signal peptide spans 1–27 (MGNKRIKAMMILVVMIMMVFSWRICEA). Residues 46 to 56 (RRPNPRNHHHQ) are compositionally biased toward basic residues. Positions 46–65 (RRPNPRNHHHQNQGFNGDDY) are disordered.

As to expression, expressed mainly in flowers. Lower levels in buds and seedlings. Detected in vascular tissues and in hydathodes.

It localises to the secreted. It is found in the extracellular space. Functionally, may be involved in floral abscission. The chain is Protein IDA-LIKE 5 (IDL5) from Arabidopsis thaliana (Mouse-ear cress).